Here is a 157-residue protein sequence, read N- to C-terminus: 2-C-methyl-D-erythritol 2,4-cyclodiphosphate synthase (157 aa).

A divalent metal cation is bound by residues D8 and H10. Residues 8-10 (DVH) and 34-35 (HS) each bind 4-CDP-2-C-methyl-D-erythritol 2-phosphate. H42 contacts a divalent metal cation. 4-CDP-2-C-methyl-D-erythritol 2-phosphate-binding positions include 56-58 (DIG), 61-65 (FPDTD), 100-106 (AQAPKMA), 132-135 (TTTE), F139, and R142.

Belongs to the IspF family. Homotrimer. It depends on a divalent metal cation as a cofactor.

It catalyses the reaction 4-CDP-2-C-methyl-D-erythritol 2-phosphate = 2-C-methyl-D-erythritol 2,4-cyclic diphosphate + CMP. It participates in isoprenoid biosynthesis; isopentenyl diphosphate biosynthesis via DXP pathway; isopentenyl diphosphate from 1-deoxy-D-xylulose 5-phosphate: step 4/6. Its function is as follows. Involved in the biosynthesis of isopentenyl diphosphate (IPP) and dimethylallyl diphosphate (DMAPP), two major building blocks of isoprenoid compounds. Catalyzes the conversion of 4-diphosphocytidyl-2-C-methyl-D-erythritol 2-phosphate (CDP-ME2P) to 2-C-methyl-D-erythritol 2,4-cyclodiphosphate (ME-CPP) with a corresponding release of cytidine 5-monophosphate (CMP). The chain is 2-C-methyl-D-erythritol 2,4-cyclodiphosphate synthase from Pseudomonas syringae pv. tomato (strain ATCC BAA-871 / DC3000).